Here is a 233-residue protein sequence, read N- to C-terminus: Large ribosomal subunit protein uL1 (233 aa).

It belongs to the universal ribosomal protein uL1 family. In terms of assembly, part of the 50S ribosomal subunit.

Its function is as follows. Binds directly to 23S rRNA. The L1 stalk is quite mobile in the ribosome, and is involved in E site tRNA release. Functionally, protein L1 is also a translational repressor protein, it controls the translation of the L11 operon by binding to its mRNA. The polypeptide is Large ribosomal subunit protein uL1 (Finegoldia magna (strain ATCC 29328 / DSM 20472 / WAL 2508) (Peptostreptococcus magnus)).